We begin with the raw amino-acid sequence, 365 residues long: Delta(7)-sterol 5(6)-desaturase ERG3 (365 aa).

The Cytoplasmic portion of the chain corresponds to 1 to 92 (MDLVLEVADH…LLPRSSILRE (92 aa)). The chain crosses the membrane as a helical span at residues 93–113 (FLSLWVIVTIFGLLLYLFTAS). The Lumenal segment spans residues 114–140 (LSYVFVFDKSIFNHPRYLKNQMAMEIK). Residues 141–161 (LAVSAIPWMSMLTVPWFVMEL) traverse the membrane as a helical segment. Residues 162–242 (NGHSKLYMKI…VDGFLQSISY (81 aa)) lie on the Cytoplasmic side of the membrane. Residues 187–311 (TFIFFTDCGV…FTTLWDRLGG (125 aa)) enclose the Fatty acid hydroxylase domain. The short motif at 200 to 204 (HRWLH) is the Histidine box-1 element. The Histidine box-2 motif lies at 213 to 217 (HKPHH). A helical membrane pass occupies residues 243–263 (HIYPLILPLHKVSYLILFTFV). At 264–365 (NFWTVMIHDG…ENDPNTKKNN (102 aa)) the chain is on the lumenal side. The Histidine box-3 signature appears at 288-292 (HTVHH). Glycyl lysine isopeptide (Lys-Gly) (interchain with G-Cter in ubiquitin) cross-links involve residues Lys324 and Lys344.

Belongs to the sterol desaturase family. In terms of assembly, interacts with ERG28. Fe cation is required as a cofactor.

It localises to the endoplasmic reticulum membrane. It carries out the reaction episterol + 2 Fe(II)-[cytochrome b5] + O2 + 2 H(+) = 5-dehydroepisterol + 2 Fe(III)-[cytochrome b5] + 2 H2O. Its pathway is steroid metabolism; ergosterol biosynthesis; ergosterol from zymosterol: step 3/5. Functionally, C-5 sterol desaturase; part of the third module of ergosterol biosynthesis pathway that includes the late steps of the pathway. ERG3 catalyzes the introduction of a C-5 double bond in the B ring to produce 5-dehydroepisterol. The third module or late pathway involves the ergosterol synthesis itself through consecutive reactions that mainly occur in the endoplasmic reticulum (ER) membrane. Firstly, the squalene synthase ERG9 catalyzes the condensation of 2 farnesyl pyrophosphate moieties to form squalene, which is the precursor of all steroids. Squalene synthase is crucial for balancing the incorporation of farnesyl diphosphate (FPP) into sterol and nonsterol isoprene synthesis. Secondly, the squalene epoxidase ERG1 catalyzes the stereospecific oxidation of squalene to (S)-2,3-epoxysqualene, which is considered to be a rate-limiting enzyme in steroid biosynthesis. Then, the lanosterol synthase ERG7 catalyzes the cyclization of (S)-2,3 oxidosqualene to lanosterol, a reaction that forms the sterol core. In the next steps, lanosterol is transformed to zymosterol through a complex process involving various demethylation, reduction and desaturation reactions. The lanosterol 14-alpha-demethylase ERG11 (also known as CYP51) catalyzes C14-demethylation of lanosterol to produce 4,4'-dimethyl cholesta-8,14,24-triene-3-beta-ol, which is critical for ergosterol biosynthesis. The C-14 reductase ERG24 reduces the C14=C15 double bond of 4,4-dimethyl-cholesta-8,14,24-trienol to produce 4,4-dimethyl-cholesta-8,24-dienol. 4,4-dimethyl-cholesta-8,24-dienol is substrate of the C-4 demethylation complex ERG25-ERG26-ERG27 in which ERG25 catalyzes the three-step monooxygenation required for the demethylation of 4,4-dimethyl and 4alpha-methylsterols, ERG26 catalyzes the oxidative decarboxylation that results in a reduction of the 3-beta-hydroxy group at the C-3 carbon to an oxo group, and ERG27 is responsible for the reduction of the keto group on the C-3. ERG28 has a role as a scaffold to help anchor ERG25, ERG26 and ERG27 to the endoplasmic reticulum and ERG29 regulates the activity of the iron-containing C4-methylsterol oxidase ERG25. Then, the sterol 24-C-methyltransferase ERG6 catalyzes the methyl transfer from S-adenosyl-methionine to the C-24 of zymosterol to form fecosterol. The C-8 sterol isomerase ERG2 catalyzes the reaction which results in unsaturation at C-7 in the B ring of sterols and thus converts fecosterol to episterol. The sterol-C5-desaturase ERG3 then catalyzes the introduction of a C-5 double bond in the B ring to produce 5-dehydroepisterol. The C-22 sterol desaturase ERG5 further converts 5-dehydroepisterol into ergosta-5,7,22,24(28)-tetraen-3beta-ol by forming the C-22(23) double bond in the sterol side chain. Finally, ergosta-5,7,22,24(28)-tetraen-3beta-ol is substrate of the C-24(28) sterol reductase ERG4 to produce ergosterol. The chain is Delta(7)-sterol 5(6)-desaturase ERG3 from Saccharomyces cerevisiae (strain ATCC 204508 / S288c) (Baker's yeast).